The sequence spans 85 residues: RNA-binding protein Hfq (85 aa).

The 60-residue stretch at 9–68 folds into the Sm domain; that stretch reads DPFLNALRRERIPVSIYLVNGIKLQGQIESFDQFVVLLKNTVSQMVYKHAISTVVPARIP.

The protein belongs to the Hfq family. As to quaternary structure, homohexamer.

In terms of biological role, RNA chaperone that binds small regulatory RNA (sRNAs) and mRNAs to facilitate mRNA translational regulation in response to envelope stress, environmental stress and changes in metabolite concentrations. Also binds with high specificity to tRNAs. The polypeptide is RNA-binding protein Hfq (Idiomarina loihiensis (strain ATCC BAA-735 / DSM 15497 / L2-TR)).